Consider the following 417-residue polypeptide: MLKRDMTIANYDPQLWQAITDETRRQEEHIELIASENYTSPRVMEAQGSQLTNKYAEGYPAKRYYGGCEYVDVVETLAIERAKELFGATYANVQPHSGSQANSAVYMALLQPGDTVLGMNLAHGGHLTHGSPVNFSGKLYNIIPYGIDESGKIDYDEMERLAVEHKPKMMIGGFSAYSGIVDWARMREIADKIGAWLFVDMAHVAGLIAAGVYPNPVPHAHVVTSTTHKTLAGPRGGLILSAADDEDLYKKLNSAVFPGGQGGPLMHVIAGKAVAFKEALEPEFKTYQAQVVKNAKAMAATFIERGYKIVSGGTDNHLMLVDLIGRELTGKEADAALGKANITVNKNSVPNDPRSPFVTSGVRIGTPAITRRGFKEAESIHLTNWICDVLDNHDNDEVLANTREKVLDICRRFPVYA.

(6S)-5,6,7,8-tetrahydrofolate-binding positions include leucine 121 and glycine 125 to leucine 127. The residue at position 229 (lysine 229) is an N6-(pyridoxal phosphate)lysine. Serine 355 to phenylalanine 357 contributes to the (6S)-5,6,7,8-tetrahydrofolate binding site.

Belongs to the SHMT family. Homodimer. Pyridoxal 5'-phosphate serves as cofactor.

It localises to the cytoplasm. It carries out the reaction (6R)-5,10-methylene-5,6,7,8-tetrahydrofolate + glycine + H2O = (6S)-5,6,7,8-tetrahydrofolate + L-serine. It participates in one-carbon metabolism; tetrahydrofolate interconversion. Its pathway is amino-acid biosynthesis; glycine biosynthesis; glycine from L-serine: step 1/1. Its function is as follows. Catalyzes the reversible interconversion of serine and glycine with tetrahydrofolate (THF) serving as the one-carbon carrier. This reaction serves as the major source of one-carbon groups required for the biosynthesis of purines, thymidylate, methionine, and other important biomolecules. Also exhibits THF-independent aldolase activity toward beta-hydroxyamino acids, producing glycine and aldehydes, via a retro-aldol mechanism. This is Serine hydroxymethyltransferase from Aeromonas salmonicida (strain A449).